A 372-amino-acid polypeptide reads, in one-letter code: 4-hydroxy-3-methylbut-2-en-1-yl diphosphate synthase (flavodoxin) (372 aa).

[4Fe-4S] cluster is bound by residues cysteine 270, cysteine 273, cysteine 305, and glutamate 312.

The protein belongs to the IspG family. [4Fe-4S] cluster is required as a cofactor.

It catalyses the reaction (2E)-4-hydroxy-3-methylbut-2-enyl diphosphate + oxidized [flavodoxin] + H2O + 2 H(+) = 2-C-methyl-D-erythritol 2,4-cyclic diphosphate + reduced [flavodoxin]. The protein operates within isoprenoid biosynthesis; isopentenyl diphosphate biosynthesis via DXP pathway; isopentenyl diphosphate from 1-deoxy-D-xylulose 5-phosphate: step 5/6. Converts 2C-methyl-D-erythritol 2,4-cyclodiphosphate (ME-2,4cPP) into 1-hydroxy-2-methyl-2-(E)-butenyl 4-diphosphate. This Citrobacter koseri (strain ATCC BAA-895 / CDC 4225-83 / SGSC4696) protein is 4-hydroxy-3-methylbut-2-en-1-yl diphosphate synthase (flavodoxin).